A 79-amino-acid polypeptide reads, in one-letter code: uncharacterized protein (79 aa).

The segment at 20-52 is disordered; that stretch reads TERGAGLSPAAPPDPSPAIAPTMAEGGVPSPGP.

This is an uncharacterized protein from Homo sapiens (Human).